The following is a 253-amino-acid chain: Tryptophan synthase alpha chain (253 aa).

Active-site proton acceptor residues include Glu47 and Asp58.

This sequence belongs to the TrpA family. As to quaternary structure, tetramer of two alpha and two beta chains.

It catalyses the reaction (1S,2R)-1-C-(indol-3-yl)glycerol 3-phosphate + L-serine = D-glyceraldehyde 3-phosphate + L-tryptophan + H2O. It functions in the pathway amino-acid biosynthesis; L-tryptophan biosynthesis; L-tryptophan from chorismate: step 5/5. In terms of biological role, the alpha subunit is responsible for the aldol cleavage of indoleglycerol phosphate to indole and glyceraldehyde 3-phosphate. The protein is Tryptophan synthase alpha chain of Desulforapulum autotrophicum (strain ATCC 43914 / DSM 3382 / VKM B-1955 / HRM2) (Desulfobacterium autotrophicum).